We begin with the raw amino-acid sequence, 369 residues long: Caffeine synthase 1 (369 aa).

Y24 contributes to the S-adenosyl-L-homocysteine binding site. Residue T31 coordinates caffeine. Residues C66, N71, D103, L104, S138, and F139 each contribute to the S-adenosyl-L-homocysteine site. Residues Y156, H159, and W160 each contribute to the caffeine site. N177 serves as a coordination point for Mg(2+). R225 lines the caffeine pocket. Mg(2+)-binding residues include D263, F265, and N266. A caffeine-binding site is contributed by F321.

It belongs to the methyltransferase superfamily. Type-7 methyltransferase family. Mg(2+) serves as cofactor.

It catalyses the reaction theobromine + S-adenosyl-L-methionine = caffeine + S-adenosyl-L-homocysteine + H(+). The enzyme catalyses 7-methylxanthine + S-adenosyl-L-methionine = theobromine + S-adenosyl-L-homocysteine + H(+). Its pathway is alkaloid biosynthesis. In terms of biological role, involved in the biosynthesis of caffeine. Catalyzes the conversion of 7-methylxanthine (7mX) to theobromine and of theobromine to caffeine. This chain is Caffeine synthase 1, found in Camellia crassicolumna (Evergreen tea).